Consider the following 790-residue polypeptide: Pentatricopeptide repeat-containing protein At1g25360 (790 aa).

PPR repeat units follow at residues arginine 48 to alanine 82, threonine 84 to cysteine 109, aspartate 112 to proline 146, aspartate 147 to tyrosine 182, isoleucine 183 to lysine 217, aspartate 218 to asparagine 248, lysine 250 to leucine 284, aspartate 285 to arginine 315, serine 319 to lysine 349, aspartate 350 to serine 384, tryptophan 385 to proline 415, cysteine 416 to serine 450, serine 451 to leucine 481, aspartate 482 to proline 516, aspartate 517 to proline 551, and glycine 553 to lysine 583. The interval isoleucine 588–glutamate 663 is type E motif. The type E(+) motif stretch occupies residues threonine 664 to arginine 694. The type DYW motif stretch occupies residues arginine 695–tryptophan 790.

The protein belongs to the PPR family. PCMP-H subfamily.

The polypeptide is Pentatricopeptide repeat-containing protein At1g25360 (PCMP-H74) (Arabidopsis thaliana (Mouse-ear cress)).